The sequence spans 201 residues: Superoxide dismutase [Mn] (201 aa).

Positions 27, 81, 163, and 167 each coordinate Mn(2+).

The protein belongs to the iron/manganese superoxide dismutase family. Homodimer. The cofactor is Mn(2+).

It localises to the secreted. It carries out the reaction 2 superoxide + 2 H(+) = H2O2 + O2. Destroys superoxide anion radicals which are normally produced within the cells and which are toxic to biological systems. This is Superoxide dismutase [Mn] (sodA) from Streptococcus pyogenes serotype M18 (strain MGAS8232).